Consider the following 255-residue polypeptide: Large ribosomal subunit protein uL4 (255 aa).

The protein belongs to the universal ribosomal protein uL4 family. As to quaternary structure, part of the 50S ribosomal subunit.

Its function is as follows. One of the primary rRNA binding proteins, this protein initially binds near the 5'-end of the 23S rRNA. It is important during the early stages of 50S assembly. It makes multiple contacts with different domains of the 23S rRNA in the assembled 50S subunit and ribosome. In terms of biological role, forms part of the polypeptide exit tunnel. This is Large ribosomal subunit protein uL4 from Thermococcus onnurineus (strain NA1).